The sequence spans 114 residues: Fumarate reductase subunit D (114 aa).

The next 3 membrane-spanning stretches (helical) occupy residues 24 to 44 (VSAI…PFGL), 50 to 70 (LITF…TIFP), and 92 to 112 (GGFI…FAVI).

This sequence belongs to the FrdD family. In terms of assembly, part of an enzyme complex containing four subunits: a flavoprotein (FrdA), an iron-sulfur protein (FrdB), and two hydrophobic anchor proteins (FrdC and FrdD).

It localises to the cell inner membrane. In terms of biological role, anchors the catalytic components of the fumarate reductase complex to the cell membrane, binds quinones. The chain is Fumarate reductase subunit D from Haemophilus influenzae (strain PittEE).